The primary structure comprises 196 residues: Protein LURP-one-related 8 (196 aa).

The protein belongs to the LOR family.

Its function is as follows. Might be related to the phospholipid scramblase and tubby-like superfamily of membrane tethered transcription factors. The chain is Protein LURP-one-related 8 from Arabidopsis thaliana (Mouse-ear cress).